Consider the following 142-residue polypeptide: Hemoglobin subunit alpha-A (142 aa).

The Globin domain occupies 2-142; the sequence is VLSANDKTNV…VGNVLTAKYR (141 aa). Residue His-59 participates in O2 binding. His-88 contacts heme b.

The protein belongs to the globin family. In terms of assembly, heterotetramer of two alpha chains and two beta chains. As to expression, red blood cells.

Functionally, involved in oxygen transport from the lung to the various peripheral tissues. This Aquila chrysaetos (Golden eagle) protein is Hemoglobin subunit alpha-A (HBAA).